The sequence spans 155 residues: Small ribosomal subunit protein uS7c (155 aa).

It belongs to the universal ribosomal protein uS7 family. Part of the 30S ribosomal subunit.

The protein localises to the plastid. The protein resides in the chloroplast. Functionally, one of the primary rRNA binding proteins, it binds directly to 16S rRNA where it nucleates assembly of the head domain of the 30S subunit. The protein is Small ribosomal subunit protein uS7c (rps7) of Cryptomeria japonica (Japanese cedar).